The following is a 295-amino-acid chain: Shikimate dehydrogenase (NADP(+)) (295 aa).

Shikimate is bound by residues serine 20–serine 22 and threonine 68. Lysine 72 functions as the Proton acceptor in the catalytic mechanism. Shikimate-binding residues include asparagine 93 and aspartate 108. NADP(+)-binding positions include glycine 132–alanine 136 and methionine 234. Shikimate is bound at residue tyrosine 236. Glycine 257 provides a ligand contact to NADP(+).

This sequence belongs to the shikimate dehydrogenase family. As to quaternary structure, homodimer.

The catalysed reaction is shikimate + NADP(+) = 3-dehydroshikimate + NADPH + H(+). It participates in metabolic intermediate biosynthesis; chorismate biosynthesis; chorismate from D-erythrose 4-phosphate and phosphoenolpyruvate: step 4/7. Its function is as follows. Involved in the biosynthesis of the chorismate, which leads to the biosynthesis of aromatic amino acids. Catalyzes the reversible NADPH linked reduction of 3-dehydroshikimate (DHSA) to yield shikimate (SA). The protein is Shikimate dehydrogenase (NADP(+)) of Chlorobaculum tepidum (strain ATCC 49652 / DSM 12025 / NBRC 103806 / TLS) (Chlorobium tepidum).